Reading from the N-terminus, the 299-residue chain is ATP phosphoribosyltransferase (299 aa).

The protein belongs to the ATP phosphoribosyltransferase family. Long subfamily. Requires Mg(2+) as cofactor.

The protein resides in the cytoplasm. The catalysed reaction is 1-(5-phospho-beta-D-ribosyl)-ATP + diphosphate = 5-phospho-alpha-D-ribose 1-diphosphate + ATP. It participates in amino-acid biosynthesis; L-histidine biosynthesis; L-histidine from 5-phospho-alpha-D-ribose 1-diphosphate: step 1/9. Its activity is regulated as follows. Feedback inhibited by histidine. Its function is as follows. Catalyzes the condensation of ATP and 5-phosphoribose 1-diphosphate to form N'-(5'-phosphoribosyl)-ATP (PR-ATP). Has a crucial role in the pathway because the rate of histidine biosynthesis seems to be controlled primarily by regulation of HisG enzymatic activity. This chain is ATP phosphoribosyltransferase, found in Campylobacter jejuni subsp. jejuni serotype O:6 (strain 81116 / NCTC 11828).